We begin with the raw amino-acid sequence, 185 residues long: HTH-type transcriptional regulator SAB2452 (185 aa).

In terms of domain architecture, HTH tetR-type spans I6–F66. A DNA-binding region (H-T-H motif) is located at residues S29 to F48.

The chain is HTH-type transcriptional regulator SAB2452 from Staphylococcus aureus (strain bovine RF122 / ET3-1).